The primary structure comprises 464 residues: MAIIRSVIAATALLGAAVNAQVVGTPFGFGAGTTGGGDATPAAPADTAELTEWLADDEPRVILIDKEFNFLGDECTDCECCIPDSNTCGDAGQNAIEVGIGWCGDYPTTTCTYDNAGLDGLDVGPNKSIVGVGDAGVIRGKGLRIHGTENVIVQNIHITELNPQYIWGGDAISLDGADKVWIDHVKISLVGRQMFVTGYESSGSVTFSNNELDGTTDWSASCDGHHYWTILALGENDKVTFANNYIHTTSGRAPKVGAPSFWHVYNNYWSDNTGHAFDVEESGTNVFIEGNVFEDINSAYNDDGTGAIFAVDSGSEATCSSVLGRTCVANSLTNSEYTAVADESVLSAFPADEEGDITILPVDQVAAYVLANAGVGKLSASGSTSGSSSSIAPSSSVPVIPTSTPLVYPTFTPPAVETNAIQKEHEVSTPAVPTPTPVPSSVGSHGSTAGSSHPPAFSRTSFES.

Residues 1–20 (MAIIRSVIAATALLGAAVNA) form the signal peptide. Residues Cys80 and Cys103 are joined by a disulfide bond. N-linked (GlcNAc...) asparagine glycosylation is present at Asn126. Residue Arg252 is part of the active site. The cysteines at positions 319 and 327 are disulfide-linked. The disordered stretch occupies residues 424-464 (EHEVSTPAVPTPTPVPSSVGSHGSTAGSSHPPAFSRTSFES). Over residues 439–448 (PSSVGSHGST) the composition is skewed to low complexity.

This sequence belongs to the polysaccharide lyase 1 family.

Its subcellular location is the secreted. It carries out the reaction Eliminative cleavage of (1-&gt;4)-alpha-D-galacturonan methyl ester to give oligosaccharides with 4-deoxy-6-O-methyl-alpha-D-galact-4-enuronosyl groups at their non-reducing ends.. Pectinolytic enzymes consist of four classes of enzymes: pectin lyase, polygalacturonase, pectin methylesterase and rhamnogalacturonase. Among pectinolytic enzymes, pectin lyase is the most important in depolymerization of pectin, since it cleaves internal glycosidic bonds of highly methylated pectins. The polypeptide is Probable pectin lyase F (pelF) (Emericella nidulans (strain FGSC A4 / ATCC 38163 / CBS 112.46 / NRRL 194 / M139) (Aspergillus nidulans)).